The sequence spans 229 residues: Type III pantothenate kinase (229 aa).

An ATP-binding site is contributed by 6 to 13; sequence NIGNSRQH. Substrate is bound by residues Y77 and 81 to 84; that span reads GIDR. D83 serves as the catalytic Proton acceptor. D103 is a binding site for K(+). T106 serves as a coordination point for ATP. A substrate-binding site is contributed by T159.

It belongs to the type III pantothenate kinase family. Homodimer. NH4(+) is required as a cofactor. K(+) serves as cofactor.

It localises to the cytoplasm. It catalyses the reaction (R)-pantothenate + ATP = (R)-4'-phosphopantothenate + ADP + H(+). It participates in cofactor biosynthesis; coenzyme A biosynthesis; CoA from (R)-pantothenate: step 1/5. Catalyzes the phosphorylation of pantothenate (Pan), the first step in CoA biosynthesis. The protein is Type III pantothenate kinase of Gloeobacter violaceus (strain ATCC 29082 / PCC 7421).